The following is a 242-amino-acid chain: Ribonuclease 3 (242 aa).

The RNase III domain maps to Leu-14–Gly-142. Glu-56 is a Mg(2+) binding site. Asp-60 is an active-site residue. The Mg(2+) site is built by Asp-128 and Glu-131. Glu-131 is a catalytic residue. The DRBM domain maps to Asn-170 to Ser-235.

Belongs to the ribonuclease III family. Homodimer. Mg(2+) is required as a cofactor.

It localises to the cytoplasm. The enzyme catalyses Endonucleolytic cleavage to 5'-phosphomonoester.. Its function is as follows. Digests double-stranded RNA. Involved in the processing of primary rRNA transcript to yield the immediate precursors to the large and small rRNAs (23S and 16S). Processes some mRNAs, and tRNAs when they are encoded in the rRNA operon. Processes pre-crRNA and tracrRNA of type II CRISPR loci if present in the organism. The polypeptide is Ribonuclease 3 (Gloeobacter violaceus (strain ATCC 29082 / PCC 7421)).